We begin with the raw amino-acid sequence, 350 residues long: Zona pellucida-binding protein 1 (350 aa).

Positions 1 to 38 are cleaved as a signal peptide; it reads MEASAPDRARRGWRRARAAASPLSRAAVVLLLSALVLR. N-linked (GlcNAc...) asparagine glycosylation is found at Asn-113, Asn-186, and Asn-339.

This sequence belongs to the zona pellucida-binding protein Sp38 family. Post-translationally, N-glycosylated. In terms of tissue distribution, expressed in testis. Detected in sperm cells.

The protein localises to the cytoplasmic vesicle. The protein resides in the secretory vesicle. Its subcellular location is the acrosome. It localises to the secreted. It is found in the acrosome membrane. Its function is as follows. Plays a role in acrosome compaction and sperm morphogenesis. Is implicated in sperm-oocyte interaction during fertilization. The chain is Zona pellucida-binding protein 1 (ZPBP) from Sus scrofa (Pig).